Here is a 376-residue protein sequence, read N- to C-terminus: Uroporphyrinogen decarboxylase (376 aa).

Substrate contacts are provided by residues 29 to 33 (RQAGR), D79, Y155, S210, and H342.

The protein belongs to the uroporphyrinogen decarboxylase family. Homodimer.

It localises to the cytoplasm. It carries out the reaction uroporphyrinogen III + 4 H(+) = coproporphyrinogen III + 4 CO2. The protein operates within porphyrin-containing compound metabolism; protoporphyrin-IX biosynthesis; coproporphyrinogen-III from 5-aminolevulinate: step 4/4. Catalyzes the decarboxylation of four acetate groups of uroporphyrinogen-III to yield coproporphyrinogen-III. This is Uroporphyrinogen decarboxylase from Paracidovorax citrulli (strain AAC00-1) (Acidovorax citrulli).